A 208-amino-acid polypeptide reads, in one-letter code: uncharacterized protein (208 aa).

Residues 124-208 are disordered; that stretch reads KKTGSSNART…PSFGKYSSLA (85 aa). Positions 133–170 are enriched in basic and acidic residues; the sequence is TPDEGKKAKNAPEEEKVKTSGSEDAKGEESAVEGKEPE.

It localises to the golgi apparatus. This is an uncharacterized protein from Encephalitozoon cuniculi (strain GB-M1) (Microsporidian parasite).